Consider the following 806-residue polypeptide: Leucine--tRNA ligase (806 aa).

The 'HIGH' region signature appears at 40–51 (PYPSGTGLHVGH). The 'KMSKS' region signature appears at 576–580 (KMSKS). Lys579 is a binding site for ATP.

Belongs to the class-I aminoacyl-tRNA synthetase family.

It localises to the cytoplasm. The catalysed reaction is tRNA(Leu) + L-leucine + ATP = L-leucyl-tRNA(Leu) + AMP + diphosphate. The polypeptide is Leucine--tRNA ligase (Prosthecochloris aestuarii (strain DSM 271 / SK 413)).